Consider the following 192-residue polypeptide: Cytochrome b-245 light chain (192 aa).

Residues 2 to 7 (GQIEWA) are Cytoplasmic-facing. The helical transmembrane segment at 8–30 (MWANEQALASGLILMTGGIVATA) threads the bilayer. At 31 to 35 (GQFTQ) the chain is on the extracellular side. The helical transmembrane segment at 36–53 (WYLGTYSIAAGVLVCLLE) threads the bilayer. Over 54-69 (YPRGRRTKGSTMERCE) the chain is Cytoplasmic. Residues 70–80 (QKYMTKVVKAF) lie within the membrane without spanning it. The Cytoplasmic portion of the chain corresponds to 81–86 (GPLSRN). Residues 87-104 (YYIRAFLHLGLSVPAGFL) traverse the membrane as a helical segment. Leu105 is a topological domain (extracellular). Residues 106–126 (ATILGTACLAIASGIYLLAAI) traverse the membrane as a helical segment. Topologically, residues 127-192 (RGEQWTPIEP…TPCPVTDEVV (66 aa)) are cytoplasmic. A disordered region spans residues 134-192 (IEPKPKERPQVGGTIKQPPSNPPPRPPPEARKKPGEEAVAGVPRGAPRKTPCPVTDEVV). At Thr147 the chain carries Phosphothreonine. Lys149 participates in a covalent cross-link: Glycyl lysine isopeptide (Lys-Gly) (interchain with G-Cter in ubiquitin).

It belongs to the p22phox family. Component of the phagocyte NADPH oxidase core complex/cytochrome b558 complex, composed of CYBB (heavy chain (beta)) and CYBA (light chain (alpha)). Component of the phagocyte NADPH oxidase complex composed of an obligatory core heterodimer formed by the membrane proteins CYBA and CYBB and the cytosolic regulatory subunits NCF1/p47-phox, NCF2/p67-phox, NCF4/p40-phox and the small GTPase RAC1 or RAC2. Interacts with NCF1 (via SH3 domain). Interacts with SH3PXD2A. Interacts with DUOX1, DUOX2 and TPO. Interacts with NOX4; this interaction mediates superoxide generation. Interacts with calprotectin (S100A8/9). Interacts with GBP7. Interacts with NOXO1. Forms a heterodimer with NOX3 and is essential for activity and cell membrane localization of NOX3. Interacts with NOX1. Post-translationally, phosphorylation at Thr-147 enhances NADPH oxidase activity by promoting NCF1/p47-phox binding. In terms of processing, ubiquitinated at Lys-149 likely by RNF145.

The protein resides in the cell membrane. In terms of biological role, subunit of NADPH oxidase complexes that is required for the NADPH oxidase activity that generates, in various cell types, superoxide from molecular oxygen utilizing NADPH as an electron donor. Subunit of the phagocyte NADPH oxidase complex that mediates the transfer of electrons from cytosolic NADPH to O2 to produce the superoxide anion (O2(-)). In the activated complex, electrons are first transferred from NADPH to flavin adenine dinucleotide (FAD) and subsequently transferred via two heme molecules to molecular oxygen, producing superoxide through an outer-sphere reaction. Activation of the NADPH oxidase complex is initiated by the assembly of cytosolic subunits of the NADPH oxidase complex with the core NADPH oxidase complex to form a complex at the plasma membrane or phagosomal membrane. This activation process is initiated by phosphorylation dependent binding of the cytosolic NCF1/p47-phox subunit to the C-terminus of CYBA/p22-phox. Aassociates with NOX3 to form a functional NADPH oxidase constitutively generating superoxide. The sequence is that of Cytochrome b-245 light chain from Sus scrofa (Pig).